A 191-amino-acid polypeptide reads, in one-letter code: Glutathione-dependent formaldehyde-activating enzyme (191 aa).

In terms of domain architecture, CENP-V/GFA spans 22–169 (FAGGTLQCLC…LTELGLTPYD (148 aa)). Zn(2+)-binding residues include Cys29, Cys31, Cys50, Cys52, Cys55, Cys97, and Cys100.

It belongs to the Gfa family. Requires Zn(2+) as cofactor.

It catalyses the reaction S-(hydroxymethyl)glutathione = glutathione + formaldehyde. The protein operates within one-carbon metabolism; formaldehyde degradation; formate from formaldehyde (glutathione route): step 1/3. Its function is as follows. Catalyzes the condensation of formaldehyde and glutathione to S-hydroxymethylglutathione. The protein is Glutathione-dependent formaldehyde-activating enzyme of Xanthomonas campestris pv. campestris (strain 8004).